The chain runs to 435 residues: Gamma-glutamyl phosphate reductase (435 aa).

It belongs to the gamma-glutamyl phosphate reductase family.

Its subcellular location is the cytoplasm. It carries out the reaction L-glutamate 5-semialdehyde + phosphate + NADP(+) = L-glutamyl 5-phosphate + NADPH + H(+). It participates in amino-acid biosynthesis; L-proline biosynthesis; L-glutamate 5-semialdehyde from L-glutamate: step 2/2. In terms of biological role, catalyzes the NADPH-dependent reduction of L-glutamate 5-phosphate into L-glutamate 5-semialdehyde and phosphate. The product spontaneously undergoes cyclization to form 1-pyrroline-5-carboxylate. In Synechococcus sp. (strain WH7803), this protein is Gamma-glutamyl phosphate reductase.